Consider the following 109-residue polypeptide: Parvalbumin, thymic (109 aa).

Alanine 2 is modified (N-acetylalanine). EF-hand domains follow at residues 39 to 74 (KTPD…FSSS) and 78 to 109 (LTSA…LVKA). 9 residues coordinate Ca(2+): aspartate 52, aspartate 54, serine 56, glutamate 63, aspartate 91, aspartate 93, aspartate 95, lysine 97, and glutamate 102.

Belongs to the parvalbumin family.

Its function is as follows. Appears to promote immune maturation in bone marrow cells in culture. Binds two calcium ions. The sequence is that of Parvalbumin, thymic from Gallus gallus (Chicken).